A 345-amino-acid polypeptide reads, in one-letter code: MFSSLYPLARASLFKMDAEDAHHLTLRALGAAGRTGLACALSARVPDAPRTVMGLTFRNPVGLAAGLDKDGAAIDGLAALGFGFIEVGTVTPRPQPGNPRPRMFRLPQAEALINRMGFNNHGVDQFVKNVQAARYRGILGLNIGKNADTPIERAAEDYLYCLERVYPFASYVTINISSPNTKNLRQLQGAGELDALLAALKDKQQRLADLHGKLVPLALKIAPDLDDEQVKEIGDTLLRHKIEAVIATNTTLSRAAVQGLPHADEAGGLSGRPVFDASNEVIRKLHAEVGNDVPIIGVGGIFSGEDAHAKLAAGAALVQLYTGFIYRGPALVSECVKAIARERSA.

Residues A65–K69 and T89 each bind FMN. Position 69 (K69) interacts with substrate. N114–F118 lines the substrate pocket. FMN contacts are provided by N142 and N175. N175 serves as a coordination point for substrate. The Nucleophile role is filled by S178. Residue N180 participates in substrate binding. Residues K220 and T248 each contribute to the FMN site. Residue N249–T250 coordinates substrate. Residues G271, G300, and Y321–T322 contribute to the FMN site.

Belongs to the dihydroorotate dehydrogenase family. Type 2 subfamily. As to quaternary structure, monomer. FMN serves as cofactor.

It is found in the cell membrane. The enzyme catalyses (S)-dihydroorotate + a quinone = orotate + a quinol. Its pathway is pyrimidine metabolism; UMP biosynthesis via de novo pathway; orotate from (S)-dihydroorotate (quinone route): step 1/1. Its function is as follows. Catalyzes the conversion of dihydroorotate to orotate with quinone as electron acceptor. The polypeptide is Dihydroorotate dehydrogenase (quinone) (Burkholderia cenocepacia (strain HI2424)).